Reading from the N-terminus, the 664-residue chain is Glycine--tRNA ligase beta subunit (664 aa).

Belongs to the class-II aminoacyl-tRNA synthetase family. In terms of assembly, tetramer of two alpha and two beta subunits.

Its subcellular location is the cytoplasm. The enzyme catalyses tRNA(Gly) + glycine + ATP = glycyl-tRNA(Gly) + AMP + diphosphate. The protein is Glycine--tRNA ligase beta subunit of Rickettsia peacockii (strain Rustic).